We begin with the raw amino-acid sequence, 497 residues long: Glycerol kinase (497 aa).

ADP is bound at residue T12. 3 residues coordinate ATP: T12, T13, and S14. Sn-glycerol 3-phosphate is bound at residue T12. R16 serves as a coordination point for ADP. Residues R82, E83, Y134, and D243 each coordinate sn-glycerol 3-phosphate. Positions 82, 83, 134, 243, and 244 each coordinate glycerol. 2 residues coordinate ADP: T265 and G308. Residues T265, G308, Q312, and G409 each contribute to the ATP site. G409 and N413 together coordinate ADP.

Belongs to the FGGY kinase family. Homotetramer and homodimer (in equilibrium).

It carries out the reaction glycerol + ATP = sn-glycerol 3-phosphate + ADP + H(+). Its pathway is polyol metabolism; glycerol degradation via glycerol kinase pathway; sn-glycerol 3-phosphate from glycerol: step 1/1. Its activity is regulated as follows. Activated by phosphorylation and inhibited by fructose 1,6-bisphosphate (FBP). In terms of biological role, key enzyme in the regulation of glycerol uptake and metabolism. Catalyzes the phosphorylation of glycerol to yield sn-glycerol 3-phosphate. The polypeptide is Glycerol kinase (Thermoanaerobacter sp. (strain X514)).